The primary structure comprises 220 residues: Ribosomal RNA large subunit methyltransferase E (220 aa).

Over residues 1 to 10 (MSRSGKDPGK) the composition is skewed to basic and acidic residues. Residues 1–24 (MSRSGKDPGKRVKTARKRSASSTR) are disordered. 5 residues coordinate S-adenosyl-L-methionine: glycine 75, tryptophan 77, aspartate 94, aspartate 110, and aspartate 134. Lysine 174 (proton acceptor) is an active-site residue.

Belongs to the class I-like SAM-binding methyltransferase superfamily. RNA methyltransferase RlmE family.

It localises to the cytoplasm. The catalysed reaction is uridine(2552) in 23S rRNA + S-adenosyl-L-methionine = 2'-O-methyluridine(2552) in 23S rRNA + S-adenosyl-L-homocysteine + H(+). In terms of biological role, specifically methylates the uridine in position 2552 of 23S rRNA at the 2'-O position of the ribose in the fully assembled 50S ribosomal subunit. This is Ribosomal RNA large subunit methyltransferase E from Erythrobacter litoralis (strain HTCC2594).